A 199-amino-acid chain; its full sequence is 7-methyl-GTP pyrophosphatase (199 aa).

Asp-74 acts as the Proton acceptor in catalysis.

Belongs to the Maf family. YceF subfamily. A divalent metal cation is required as a cofactor.

The protein localises to the cytoplasm. The catalysed reaction is N(7)-methyl-GTP + H2O = N(7)-methyl-GMP + diphosphate + H(+). Nucleoside triphosphate pyrophosphatase that hydrolyzes 7-methyl-GTP (m(7)GTP). May have a dual role in cell division arrest and in preventing the incorporation of modified nucleotides into cellular nucleic acids. The protein is 7-methyl-GTP pyrophosphatase of Albidiferax ferrireducens (strain ATCC BAA-621 / DSM 15236 / T118) (Rhodoferax ferrireducens).